A 580-amino-acid polypeptide reads, in one-letter code: DNA ligase B (580 aa).

Catalysis depends on Lys-135, which acts as the N6-AMP-lysine intermediate.

The protein belongs to the NAD-dependent DNA ligase family. LigB subfamily.

The catalysed reaction is NAD(+) + (deoxyribonucleotide)n-3'-hydroxyl + 5'-phospho-(deoxyribonucleotide)m = (deoxyribonucleotide)n+m + AMP + beta-nicotinamide D-nucleotide.. Its function is as follows. Catalyzes the formation of phosphodiester linkages between 5'-phosphoryl and 3'-hydroxyl groups in double-stranded DNA using NAD as a coenzyme and as the energy source for the reaction. This is DNA ligase B from Photorhabdus laumondii subsp. laumondii (strain DSM 15139 / CIP 105565 / TT01) (Photorhabdus luminescens subsp. laumondii).